The primary structure comprises 218 residues: MANSSPVYDWFQERLEIQDIADDVTSKYVPPHVNIFYCLGGITLVCFLIQFATGFAMTFYYKPTVTEAYSSVSYLMTDVSFGWLIRSVHRWSASMMVLMLILHVFRVYLTGGFKRPRELTWVTGVVMAVITVAFGVTGYSLPWDQVGYWAVKIVSGVPAAIPVVGDFMVELLRGGESVGQTTLTRFYSLHTFVLPWTLAVFMLMHFLMIRKQGISGPL.

The helical transmembrane segment at 35–55 (IFYCLGGITLVCFLIQFATGF) threads the bilayer. Residue Cys-38 coordinates heme c. Residues His-89 and His-103 each coordinate heme b. 3 helical membrane passes run 93 to 113 (ASMM…TGGF), 119 to 139 (LTWV…VTGY), and 189 to 209 (LHTF…FLMI). Positions 190 and 205 each coordinate heme b.

Belongs to the cytochrome b family. PetB subfamily. In terms of assembly, the 4 large subunits of the cytochrome b6-f complex are cytochrome b6, subunit IV (17 kDa polypeptide, PetD), cytochrome f and the Rieske protein, while the 4 small subunits are PetG, PetL, PetM and PetN. The complex functions as a dimer. The cofactor is heme b. Requires heme c as cofactor.

It is found in the cellular thylakoid membrane. In terms of biological role, component of the cytochrome b6-f complex, which mediates electron transfer between photosystem II (PSII) and photosystem I (PSI), cyclic electron flow around PSI, and state transitions. The chain is Cytochrome b6 from Prochlorococcus marinus (strain MIT 9211).